The chain runs to 199 residues: Peptidyl-tRNA hydrolase (199 aa).

Tyr-18 lines the tRNA pocket. Catalysis depends on His-23, which acts as the Proton acceptor. 3 residues coordinate tRNA: Tyr-72, Asn-74, and Asn-120.

It belongs to the PTH family. As to quaternary structure, monomer.

The protein localises to the cytoplasm. It carries out the reaction an N-acyl-L-alpha-aminoacyl-tRNA + H2O = an N-acyl-L-amino acid + a tRNA + H(+). Hydrolyzes ribosome-free peptidyl-tRNAs (with 1 or more amino acids incorporated), which drop off the ribosome during protein synthesis, or as a result of ribosome stalling. Functionally, catalyzes the release of premature peptidyl moieties from peptidyl-tRNA molecules trapped in stalled 50S ribosomal subunits, and thus maintains levels of free tRNAs and 50S ribosomes. In Bifidobacterium adolescentis (strain ATCC 15703 / DSM 20083 / NCTC 11814 / E194a), this protein is Peptidyl-tRNA hydrolase.